Consider the following 502-residue polypeptide: Mannitol dehydrogenase 2 (502 aa).

It belongs to the mannitol dehydrogenase family.

It carries out the reaction D-mannitol + NAD(+) = D-fructose + NADH + H(+). In terms of biological role, catalyzes the NAD(H)-dependent interconversion of D-fructose and D-mannitol in the mannitol metabolic pathway. This chain is Mannitol dehydrogenase 2, found in Saccharomyces cerevisiae (strain ATCC 204508 / S288c) (Baker's yeast).